Reading from the N-terminus, the 819-residue chain is Deubiquitinase MYSM1 (819 aa).

The span at methionine 1–glycine 12 shows a compositional bias: acidic residues. The segment at methionine 1–valine 29 is disordered. Serine 107 bears the Phosphoserine mark. The SANT domain occupies serine 113–valine 164. A Glycyl lysine isopeptide (Lys-Gly) (interchain with G-Cter in SUMO2) cross-link involves residue lysine 184. Residue serine 215 is modified to Phosphoserine. 3 disordered regions span residues glutamate 228–asparagine 247, glutamine 260–glutamate 279, and leucine 318–leucine 347. Residues threonine 230–histidine 240 are compositionally biased toward polar residues. The residue at position 233 (threonine 233) is a Phosphothreonine. Positions leucine 318 to aspartate 340 are enriched in basic and acidic residues. Phosphoserine is present on serine 332. Residues leucine 363–arginine 461 enclose the SWIRM domain. In terms of domain architecture, MPN spans valine 568–leucine 700. Zn(2+) is bound by residues histidine 647, histidine 649, and aspartate 660. Positions histidine 647–aspartate 660 match the JAMM motif motif. Residues leucine 765–leucine 769 carry the LXXLL motif motif.

The protein belongs to the peptidase M67A family. MYSM1 subfamily. In terms of assembly, component of a large chromatin remodeling complex, at least composed of MYSM1, PCAF, RBM10 and KIF11/TRIP5. Binds histones.

It localises to the nucleus. Its subcellular location is the cytoplasm. Its function is as follows. Metalloprotease with deubiquitinase activity that plays important regulator roles in hematopoietic stem cell function, blood cell production and immune response. Participates in the normal programming of B-cell responses to antigen after the maturation process. Within the cytoplasm, plays critical roles in the repression of innate immunity and autoimmunity. Removes 'Lys-63'-linked polyubiquitins from TRAF3 and TRAF6 complexes. Attenuates NOD2-mediated inflammation and tissue injury by promoting 'Lys-63'-linked deubiquitination of RIPK2 component. Suppresses the CGAS-STING1 signaling pathway by cleaving STING1 'Lys-63'-linked ubiquitin chains. In the nucleus, acts as a hematopoietic transcription regulator derepressing a range of genes essential for normal stem cell differentiation including EBF1 and PAX5 in B-cells, ID2 in NK-cell progenitor or FLT3 in dendritic cell precursors. Deubiquitinates monoubiquitinated histone H2A, a specific tag for epigenetic transcriptional repression, leading to dissociation of histone H1 from the nucleosome. The polypeptide is Deubiquitinase MYSM1 (Mysm1) (Mus musculus (Mouse)).